Reading from the N-terminus, the 641-residue chain is Soluble starch synthase 1, chloroplastic/amyloplastic (641 aa).

The transit peptide at 1 to 113 directs the protein to the chloroplast; it reads MATAAGMGIG…DSIDKTIFVA (113 aa). The disordered stretch occupies residues 62–96; sequence TFLVPTSTPPAPTQSPAPAPTPPPLPDSGVGEIEP. The span at 68 to 87 shows a compositional bias: pro residues; it reads STPPAPTQSPAPAPTPPPLP. Lys147 contributes to the ADP-alpha-D-glucose binding site.

It belongs to the glycosyltransferase 1 family. Bacterial/plant glycogen synthase subfamily.

The protein localises to the plastid. It localises to the chloroplast. It is found in the amyloplast. The enzyme catalyses [(1-&gt;4)-alpha-D-glucosyl](n) + ADP-alpha-D-glucose = [(1-&gt;4)-alpha-D-glucosyl](n+1) + ADP + H(+). Its pathway is glycan biosynthesis; starch biosynthesis. The polypeptide is Soluble starch synthase 1, chloroplastic/amyloplastic (Oryza sativa subsp. indica (Rice)).